The sequence spans 356 residues: Dihydroorotate dehydrogenase (quinone) (356 aa).

Residues 66–70 and Thr-90 each bind FMN; that span reads AGFDK. Lys-70 contributes to the substrate binding site. Substrate is bound at residue 115-119; sequence NRMGF. Residues Asn-143 and Asn-176 each contribute to the FMN site. Substrate is bound at residue Asn-176. Ser-179 (nucleophile) is an active-site residue. Asn-181 provides a ligand contact to substrate. FMN-binding residues include Lys-212 and Thr-240. Residue 241–242 participates in substrate binding; the sequence is NT. Residues Gly-264, Gly-293, and 314 to 315 each bind FMN; that span reads YT.

The protein belongs to the dihydroorotate dehydrogenase family. Type 2 subfamily. Monomer. Requires FMN as cofactor.

Its subcellular location is the cell membrane. It carries out the reaction (S)-dihydroorotate + a quinone = orotate + a quinol. Its pathway is pyrimidine metabolism; UMP biosynthesis via de novo pathway; orotate from (S)-dihydroorotate (quinone route): step 1/1. Its function is as follows. Catalyzes the conversion of dihydroorotate to orotate with quinone as electron acceptor. This chain is Dihydroorotate dehydrogenase (quinone) (pyrD), found in Mycobacterium leprae (strain TN).